The following is a 379-amino-acid chain: Homoserine O-succinyltransferase (379 aa).

Residues 51–360 enclose the AB hydrolase-1 domain; the sequence is NAVLICHALS…DSPYGHDAFL (310 aa). Catalysis depends on Ser157, which acts as the Nucleophile. Arg227 is a substrate binding site. Catalysis depends on residues Asp323 and His356. Asp357 provides a ligand contact to substrate.

The protein belongs to the AB hydrolase superfamily. MetX family. In terms of assembly, homodimer.

It localises to the cytoplasm. The enzyme catalyses L-homoserine + succinyl-CoA = O-succinyl-L-homoserine + CoA. It functions in the pathway amino-acid biosynthesis; L-methionine biosynthesis via de novo pathway; O-succinyl-L-homoserine from L-homoserine: step 1/1. Its function is as follows. Transfers a succinyl group from succinyl-CoA to L-homoserine, forming succinyl-L-homoserine. The sequence is that of Homoserine O-succinyltransferase from Pseudomonas putida (strain GB-1).